Here is a 181-residue protein sequence, read N- to C-terminus: Inner membrane-spanning protein YciB (181 aa).

The next 5 membrane-spanning stretches (helical) occupy residues 3–23, 54–74, 81–101, 119–139, and 149–169; these read LLFD…FGIY, SLAI…PWFI, IYWL…KPLI, LNLA…YVAY, and FKLF…AFYL.

It belongs to the YciB family.

The protein resides in the cell inner membrane. Its function is as follows. Plays a role in cell envelope biogenesis, maintenance of cell envelope integrity and membrane homeostasis. The chain is Inner membrane-spanning protein YciB from Legionella pneumophila (strain Corby).